Consider the following 317-residue polypeptide: Protoheme IX farnesyltransferase (317 aa).

Transmembrane regions (helical) follow at residues 29–49, 53–73, 102–122, 123–143, 151–171, 179–199, 224–241, 245–267, and 283–303; these read LILL…QGRV, LLLI…TINC, VFLA…FANL, LSAC…THWL, IVIG…AVTG, VLFG…AMLI, IFLY…LVYP, VSWG…AWQL, and FSIL…LLLP.

It belongs to the UbiA prenyltransferase family. Protoheme IX farnesyltransferase subfamily.

The protein localises to the cell inner membrane. The catalysed reaction is heme b + (2E,6E)-farnesyl diphosphate + H2O = Fe(II)-heme o + diphosphate. It functions in the pathway porphyrin-containing compound metabolism; heme O biosynthesis; heme O from protoheme: step 1/1. Functionally, converts heme B (protoheme IX) to heme O by substitution of the vinyl group on carbon 2 of heme B porphyrin ring with a hydroxyethyl farnesyl side group. The sequence is that of Protoheme IX farnesyltransferase from Thermosynechococcus vestitus (strain NIES-2133 / IAM M-273 / BP-1).